The following is a 452-amino-acid chain: Bifunctional protein GlmU (452 aa).

A pyrophosphorylase region spans residues 1–232 (MTARNSLTIV…EDEVRGINTK (232 aa)). UDP-N-acetyl-alpha-D-glucosamine is bound by residues 11-14 (LAAG), lysine 25, glutamine 78, and 83-84 (GT). Aspartate 108 provides a ligand contact to Mg(2+). The UDP-N-acetyl-alpha-D-glucosamine site is built by glycine 144, glutamate 158, asparagine 173, and asparagine 230. Asparagine 230 is a Mg(2+) binding site. Residues 233–253 (AQLAEAETVMQTRLRLAAMAA) form a linker region. An N-acetyltransferase region spans residues 254-452 (GVTLIAPETV…KSRHRKPKAH (199 aa)). UDP-N-acetyl-alpha-D-glucosamine contacts are provided by arginine 319 and lysine 337. Residue histidine 349 is the Proton acceptor of the active site. UDP-N-acetyl-alpha-D-glucosamine-binding residues include tyrosine 352 and asparagine 363. Acetyl-CoA-binding positions include alanine 366, 372–373 (NY), serine 391, serine 409, and arginine 426.

This sequence in the N-terminal section; belongs to the N-acetylglucosamine-1-phosphate uridyltransferase family. In the C-terminal section; belongs to the transferase hexapeptide repeat family. As to quaternary structure, homotrimer. Mg(2+) is required as a cofactor.

The protein localises to the cytoplasm. It carries out the reaction alpha-D-glucosamine 1-phosphate + acetyl-CoA = N-acetyl-alpha-D-glucosamine 1-phosphate + CoA + H(+). The catalysed reaction is N-acetyl-alpha-D-glucosamine 1-phosphate + UTP + H(+) = UDP-N-acetyl-alpha-D-glucosamine + diphosphate. It participates in nucleotide-sugar biosynthesis; UDP-N-acetyl-alpha-D-glucosamine biosynthesis; N-acetyl-alpha-D-glucosamine 1-phosphate from alpha-D-glucosamine 6-phosphate (route II): step 2/2. It functions in the pathway nucleotide-sugar biosynthesis; UDP-N-acetyl-alpha-D-glucosamine biosynthesis; UDP-N-acetyl-alpha-D-glucosamine from N-acetyl-alpha-D-glucosamine 1-phosphate: step 1/1. Its pathway is bacterial outer membrane biogenesis; LPS lipid A biosynthesis. In terms of biological role, catalyzes the last two sequential reactions in the de novo biosynthetic pathway for UDP-N-acetylglucosamine (UDP-GlcNAc). The C-terminal domain catalyzes the transfer of acetyl group from acetyl coenzyme A to glucosamine-1-phosphate (GlcN-1-P) to produce N-acetylglucosamine-1-phosphate (GlcNAc-1-P), which is converted into UDP-GlcNAc by the transfer of uridine 5-monophosphate (from uridine 5-triphosphate), a reaction catalyzed by the N-terminal domain. The sequence is that of Bifunctional protein GlmU from Rhodopseudomonas palustris (strain ATCC BAA-98 / CGA009).